A 144-amino-acid polypeptide reads, in one-letter code: Superoxide dismutase [Mn] 1 (144 aa).

Mn(2+) contacts are provided by histidine 42, aspartate 124, and histidine 128.

Belongs to the iron/manganese superoxide dismutase family. It depends on Mn(2+) as a cofactor.

It catalyses the reaction 2 superoxide + 2 H(+) = H2O2 + O2. In terms of biological role, destroys superoxide anion radicals which are normally produced within the cells and which are toxic to biological systems. The protein is Superoxide dismutase [Mn] 1 (sod1) of Haloferax mediterranei (Halobacterium mediterranei).